A 312-amino-acid chain; its full sequence is Putative olfactory receptor 1F2 (312 aa).

Residues 1 to 25 are Extracellular-facing; it reads MERDKPVSVSEFLLLGLSRQPQQQH. Residues 26-49 form a helical membrane-spanning segment; it reads LLFVFFLSMYLATVLGNLLIILAI. The Cytoplasmic portion of the chain corresponds to 50–57; the sequence is SIDSRLHT. A helical transmembrane segment spans residues 58–78; that stretch reads PMYFFLSNMSFVDNCFSTTVP. Residues 79 to 99 are Extracellular-facing; the sequence is KMLANHILRTQTISFSGCLMQ. A disulfide bridge links Cys-96 with Cys-188. A helical membrane pass occupies residues 100 to 119; it reads MYFISELADMDNFLLAVMAY. Residues 120–138 lie on the Cytoplasmic side of the membrane; that stretch reads DRFVAVCRPLHYTAKMIHQ. Residues 139 to 157 traverse the membrane as a helical segment; the sequence is LCALLVTGSWVVANSNALL. At 158 to 195 the chain is on the extracellular side; it reads HTLLMARLSFCADNTIPHIFCDVTPLLKLSCSDTHLSE. The chain crosses the membrane as a helical span at residues 196–218; that stretch reads VMILTEAALVTITPFLCLLASYM. The Cytoplasmic portion of the chain corresponds to 219–235; sequence HITCVVLRVPSTKGRWK. Residues 236 to 258 traverse the membrane as a helical segment; that stretch reads AFSTCGSHLAVVLLFYGTIMSPY. Residues 259 to 271 are Extracellular-facing; it reads FRTSSSHSAQRDI. A helical transmembrane segment spans residues 272-291; it reads AAAVRFTVVTPVMNPLIYSL. Residues 292-312 are Cytoplasmic-facing; sequence RNKDIKGALVKVVAVKFFSVQ.

Belongs to the G-protein coupled receptor 1 family.

It is found in the cell membrane. Functionally, odorant receptor. The polypeptide is Putative olfactory receptor 1F2 (OR1F2P) (Homo sapiens (Human)).